Consider the following 150-residue polypeptide: SsrA-binding protein (150 aa).

Belongs to the SmpB family.

It localises to the cytoplasm. Functionally, required for rescue of stalled ribosomes mediated by trans-translation. Binds to transfer-messenger RNA (tmRNA), required for stable association of tmRNA with ribosomes. tmRNA and SmpB together mimic tRNA shape, replacing the anticodon stem-loop with SmpB. tmRNA is encoded by the ssrA gene; the 2 termini fold to resemble tRNA(Ala) and it encodes a 'tag peptide', a short internal open reading frame. During trans-translation Ala-aminoacylated tmRNA acts like a tRNA, entering the A-site of stalled ribosomes, displacing the stalled mRNA. The ribosome then switches to translate the ORF on the tmRNA; the nascent peptide is terminated with the 'tag peptide' encoded by the tmRNA and targeted for degradation. The ribosome is freed to recommence translation, which seems to be the essential function of trans-translation. The sequence is that of SsrA-binding protein from Nitratiruptor sp. (strain SB155-2).